Consider the following 151-residue polypeptide: Acidic phospholipase A2 6 (151 aa).

The N-terminal stretch at 1-27 (MYPAHLLVLLAVCVSLLGAASIPARPL) is a signal peptide. 7 cysteine pairs are disulfide-bonded: C38-C104, C54-C151, C56-C72, C71-C132, C78-C125, C88-C118, and C111-C123. Ca(2+)-binding residues include Y55, G57, and G59. H75 is a catalytic residue. Residue D76 coordinates Ca(2+). The active site involves D126.

It belongs to the phospholipase A2 family. Group I subfamily. D49 sub-subfamily. Ca(2+) is required as a cofactor. In terms of tissue distribution, expressed by the venom gland.

It is found in the secreted. It catalyses the reaction a 1,2-diacyl-sn-glycero-3-phosphocholine + H2O = a 1-acyl-sn-glycero-3-phosphocholine + a fatty acid + H(+). Functionally, PLA2 catalyzes the calcium-dependent hydrolysis of the 2-acyl groups in 3-sn-phosphoglycerides. The protein is Acidic phospholipase A2 6 of Tropidechis carinatus (Australian rough-scaled snake).